The primary structure comprises 1312 residues: Retinoblastoma-like protein A (1312 aa).

7 disordered regions span residues 1-67 (MMAH…NNEN), 168-231 (SSSS…KNSS), 336-359 (HNYN…NNNN), 536-611 (NNNN…IYGT), 987-1023 (NNNN…NNNN), 1168-1236 (KKND…NNTE), and 1249-1312 (EESP…RLKS). Over residues 10 to 67 (TNINTKTTAPTTTTTEQQPEQQQQQPEQQQQEKQNNNNNNNNNNNNNNNINNNENNEN) the composition is skewed to low complexity. Residues 36–117 (EQQQQEKQNN…TSSALNVDQD (82 aa)) adopt a coiled-coil conformation. Polar residues predominate over residues 168-179 (SSSSFQPDNNSK). The segment covering 180–189 (IKGRKIRKTN) has biased composition (basic residues). Residues 195-230 (NNDSNEEEEETTTDTEEEEEEDTLLNENNNSINKNS) adopt a coiled-coil conformation. The span at 198–218 (SNEEEEETTTDTEEEEEEDTL) shows a compositional bias: acidic residues. Low complexity-rich tracts occupy residues 219 to 231 (LNEN…KNSS), 337 to 359 (NYNN…NNNN), and 536 to 595 (NNNN…SSSS). Low complexity-rich tracts occupy residues 1185-1234 (NNNN…NNNN), 1251-1275 (SPST…NNNK), and 1286-1305 (SPSS…SSSG).

It belongs to the retinoblastoma protein (RB) family.

The protein resides in the nucleus. Functionally, key regulator of entry into cell division. Directly involved in heterochromatin formation by maintaining overall chromatin structure and, in particular, that of constitutive heterochromatin by stabilizing histone methylation. Controls histone H4 'Lys-20' trimethylation. Probably acts as a transcription repressor by recruiting chromatin-modifying enzymes to promoters. Plays a dual role, regulating cell-cycle progression and transcriptional events leading to terminal differentiation. In the absence of a G1 phase, functions in late G2 controlling the expression of both S-phase and mitotic genes. Controls stalk/spore preference by suppressing the DIF response in cells destined for the spore pathway. DIF is a chlorinated hydroxyphenone made by cells of spore pathway that promotes stalk differentiation. This is Retinoblastoma-like protein A from Dictyostelium discoideum (Social amoeba).